Here is a 414-residue protein sequence, read N- to C-terminus: 2,3-diketo-5-methylthiopentyl-1-phosphate enolase (414 aa).

Catalysis depends on K99, which acts as the Proton acceptor. Residues K148, 174–177 (KDDE), H265, G338, and 360–361 (GG) each bind substrate. The Mg(2+) site is built by K174, D176, and E177. Position 174 is an N6-carboxylysine (K174).

This sequence belongs to the RuBisCO large chain family. Type IV subfamily. Homodimer. The cofactor is Mg(2+).

It catalyses the reaction 5-methylsulfanyl-2,3-dioxopentyl phosphate = 2-hydroxy-5-methylsulfanyl-3-oxopent-1-enyl phosphate. The protein operates within amino-acid biosynthesis; L-methionine biosynthesis via salvage pathway; L-methionine from S-methyl-5-thio-alpha-D-ribose 1-phosphate: step 3/6. Its function is as follows. Catalyzes the enolization of 2,3-diketo-5-methylthiopentyl-1-phosphate (DK-MTP-1-P) into 2-hydroxy-3-keto-5-methylthiopentenyl-1-phosphate (HK-MTPenyl-1-P). The protein is 2,3-diketo-5-methylthiopentyl-1-phosphate enolase of Bacillus cereus (strain B4264).